Consider the following 318-residue polypeptide: uncharacterized protein (318 aa).

The protein to E.coli YfaT and P.aeruginosa PA4490.

This is an uncharacterized protein from Thermotoga maritima (strain ATCC 43589 / DSM 3109 / JCM 10099 / NBRC 100826 / MSB8).